Here is a 132-residue protein sequence, read N- to C-terminus: Small ribosomal subunit protein uS8 (132 aa).

The protein belongs to the universal ribosomal protein uS8 family. As to quaternary structure, part of the 30S ribosomal subunit. Contacts proteins S5 and S12.

Its function is as follows. One of the primary rRNA binding proteins, it binds directly to 16S rRNA central domain where it helps coordinate assembly of the platform of the 30S subunit. The polypeptide is Small ribosomal subunit protein uS8 (Geobacter sp. (strain M21)).